The chain runs to 121 residues: Large ribosomal subunit protein bL12 (121 aa).

Belongs to the bacterial ribosomal protein bL12 family. Homodimer. Part of the ribosomal stalk of the 50S ribosomal subunit. Forms a multimeric L10(L12)X complex, where L10 forms an elongated spine to which 2 to 4 L12 dimers bind in a sequential fashion. Binds GTP-bound translation factors.

Functionally, forms part of the ribosomal stalk which helps the ribosome interact with GTP-bound translation factors. Is thus essential for accurate translation. This is Large ribosomal subunit protein bL12 from Macrococcus caseolyticus (strain JCSC5402) (Macrococcoides caseolyticum).